The following is a 703-amino-acid chain: DNA ligase (703 aa).

Residues 54-58 (DAEYD), 103-104 (SL), and Glu-132 each bind NAD(+). The active-site N6-AMP-lysine intermediate is Lys-134. NAD(+)-binding residues include Arg-155, Glu-192, Lys-308, and Lys-332. Residues Cys-426, Cys-429, Cys-444, and Cys-450 each coordinate Zn(2+). Residues 608-698 (EGPGPLDGVV…ADAARALAVP (91 aa)) form the BRCT domain.

The protein belongs to the NAD-dependent DNA ligase family. LigA subfamily. Mg(2+) serves as cofactor. The cofactor is Mn(2+).

The catalysed reaction is NAD(+) + (deoxyribonucleotide)n-3'-hydroxyl + 5'-phospho-(deoxyribonucleotide)m = (deoxyribonucleotide)n+m + AMP + beta-nicotinamide D-nucleotide.. Its function is as follows. DNA ligase that catalyzes the formation of phosphodiester linkages between 5'-phosphoryl and 3'-hydroxyl groups in double-stranded DNA using NAD as a coenzyme and as the energy source for the reaction. It is essential for DNA replication and repair of damaged DNA. This is DNA ligase from Parafrankia sp. (strain EAN1pec).